Here is a 124-residue protein sequence, read N- to C-terminus: Small ribosomal subunit protein uS12 (124 aa).

D89 carries the post-translational modification 3-methylthioaspartic acid. K108 bears the N6-acetyllysine mark.

The protein belongs to the universal ribosomal protein uS12 family. In terms of assembly, part of the 30S ribosomal subunit. Contacts proteins S8 and S17. May interact with IF1 in the 30S initiation complex.

Its function is as follows. With S4 and S5 plays an important role in translational accuracy. Functionally, interacts with and stabilizes bases of the 16S rRNA that are involved in tRNA selection in the A site and with the mRNA backbone. Located at the interface of the 30S and 50S subunits, it traverses the body of the 30S subunit contacting proteins on the other side and probably holding the rRNA structure together. The combined cluster of proteins S8, S12 and S17 appears to hold together the shoulder and platform of the 30S subunit. This Escherichia coli (strain K12 / MC4100 / BW2952) protein is Small ribosomal subunit protein uS12.